The chain runs to 106 residues: UPF0091 protein RP266 (106 aa).

The protein belongs to the UPF0091 family.

This chain is UPF0091 protein RP266, found in Rickettsia prowazekii (strain Madrid E).